The following is a 507-amino-acid chain: Rhamnogalacturonase A (507 aa).

The N-terminal stretch at 1–21 (MYVSRLLLFLAPLLVKGQLSG) is a signal peptide. Cys38 and Cys64 form a disulfide bridge. Catalysis depends on Asp215, which acts as the Proton donor. The cysteines at positions 217 and 234 are disulfide-linked. N-linked (GlcNAc...) asparagine glycosylation is present at Asn235. The active site involves His290. An N-linked (GlcNAc...) asparagine glycan is attached at Asn317. Intrachain disulfides connect Cys340–Cys346 and Cys368–Cys377. Low complexity predominate over residues 462–491 (SPATSSPTATSTAISSVDPVSAATTTATSH). Positions 462–507 (SPATSSPTATSTAISSVDPVSAATTTATSHGHGKSHHKHQCRAHRH) are disordered. Over residues 492 to 507 (GHGKSHHKHQCRAHRH) the composition is skewed to basic residues.

This sequence belongs to the glycosyl hydrolase 28 family.

The protein resides in the secreted. It carries out the reaction Endohydrolysis of alpha-D-GalA-(1-&gt;2)-alpha-L-Rha glycosidic bond in the rhamnogalacturonan I backbone with initial inversion of anomeric configuration releasing oligosaccharides with beta-D-GalA at the reducing end.. In terms of biological role, pectinolytic enzymes consist of four classes of enzymes: pectine lyase, polygalacturonase, pectin methylesterase and rhamnogalacturonase. Hydrolyzes alpha-D-galacturonopyranosyl-(1,2)-alpha-L-rhamnopyranosyl linkages in the backbone of the hairy regions of pectins. Active against linseed rhamnogalacturonan. In Emericella nidulans (strain FGSC A4 / ATCC 38163 / CBS 112.46 / NRRL 194 / M139) (Aspergillus nidulans), this protein is Rhamnogalacturonase A (rhgA).